The primary structure comprises 103 residues: uncharacterized protein (103 aa).

Transmembrane regions (helical) follow at residues 12 to 34 (GFSWGIALFCLPILLWPLALTIS), 49 to 66 (TLMSVFLWAYPFGLALIA), and 79 to 101 (FARGLLGLSAVAFYGMLFYVAGG).

Its subcellular location is the cell membrane. This is an uncharacterized protein from Pasteurella multocida (strain Pm70).